A 149-amino-acid polypeptide reads, in one-letter code: Large ribosomal subunit protein bL9 (149 aa).

This sequence belongs to the bacterial ribosomal protein bL9 family.

Binds to the 23S rRNA. The chain is Large ribosomal subunit protein bL9 from Helicobacter acinonychis (strain Sheeba).